A 728-amino-acid polypeptide reads, in one-letter code: MNKRKILVTSALPYANGSIHLGHLVEYIQTDIWVRFQKMQEHEVHYVCADDAHGTPIMLRAEQEGITPRQLIDRVWHEHKTDFDGFHIGFDHYYTTDSPENQAFCEDIYRQLRAGELIAKRSVEQFYDPVKQMFLPDRYIKGECPRCHAGDQYGDSCEACGATYLPTDLISPYSAVSGARPERRTSNHYFFKLSDVRCEAFLKNWIFESIPAQPGVALETRPRLQPEAANKMNEWLSAGLVDWDISRDAPYFGFPIPRTGGKKFFYVWLDAPVGYFGSFKNYFKQNQRTQAEIDEFLRPGGNTEMVHFIGKDILYFHALFWPAMLEFSGYRTPTQIYAHGFLTVNGQKMSKSRGTFITAESYLKQGLNPEWLRYYYAAKLNDSMEDIDLSFEDFVARVNSDLVGKYVNIASRCAGFITKKFGGELTHNVSEASRKWFNQFLFCELGEGDTFLGRHMSIANFYERREYSKAIKEIMSAADVANQYVDRMKPWVLAKDSRNDRELHEVCSVALNMFRMLTVYLKPVLPKLAMEAEQFLGLDPLTWKDANSQHRLLPDGHRINDYQHLMTRIDPKQIEMLTHANKESLAPAKSQQVAQAVETMEKNSSTTPAPAKEGEAGQASASTISIEDFGKIDLRVAKILDAEHVPGADKLLKLTLDVASEQRTVFAGIKSAYDPGQLKGRLTVMVANLAPRKMKFGISEGMVLAAGDGEGPYLLSPDEGARPGMKVK.

The short motif at 13-23 is the 'HIGH' region element; sequence PYANGSIHLGH. Cys-144, Cys-147, Cys-157, and Cys-160 together coordinate Zn(2+). Residues 348–352 carry the 'KMSKS' region motif; it reads KMSKS. ATP is bound at residue Lys-351. Residues 585-620 are disordered; sequence LAPAKSQQVAQAVETMEKNSSTTPAPAKEGEAGQAS. The 101-residue stretch at 628 to 728 folds into the tRNA-binding domain; it reads DFGKIDLRVA…EGARPGMKVK (101 aa).

Belongs to the class-I aminoacyl-tRNA synthetase family. MetG type 1 subfamily. In terms of assembly, homodimer. Zn(2+) serves as cofactor.

It localises to the cytoplasm. The catalysed reaction is tRNA(Met) + L-methionine + ATP = L-methionyl-tRNA(Met) + AMP + diphosphate. Is required not only for elongation of protein synthesis but also for the initiation of all mRNA translation through initiator tRNA(fMet) aminoacylation. In Nitrosospira multiformis (strain ATCC 25196 / NCIMB 11849 / C 71), this protein is Methionine--tRNA ligase.